Reading from the N-terminus, the 314-residue chain is tRNA dimethylallyltransferase (314 aa).

16 to 23 lines the ATP pocket; sequence GPTGVGKT. 18–23 is a substrate binding site; sequence TGVGKT. An interaction with substrate tRNA region spans residues 41–44; it reads DSMQ.

This sequence belongs to the IPP transferase family. Monomer. Requires Mg(2+) as cofactor.

The catalysed reaction is adenosine(37) in tRNA + dimethylallyl diphosphate = N(6)-dimethylallyladenosine(37) in tRNA + diphosphate. Catalyzes the transfer of a dimethylallyl group onto the adenine at position 37 in tRNAs that read codons beginning with uridine, leading to the formation of N6-(dimethylallyl)adenosine (i(6)A). The sequence is that of tRNA dimethylallyltransferase from Desulfosudis oleivorans (strain DSM 6200 / JCM 39069 / Hxd3) (Desulfococcus oleovorans).